Consider the following 465-residue polypeptide: Pleckstrin homology domain-containing family S member 1 (465 aa).

The PH domain maps to 14 to 129; the sequence is EVCKQDYFIK…WVSFMSSFRQ (116 aa). The span at 159-173 shows a compositional bias: polar residues; it reads PSSTSEAVGSSSPRN. 2 disordered regions span residues 159-179 and 258-283; these read PSSTSEAVGSSSPRNGLQDKH and ETSHESVDSSKEEPQTLPETQDGDLH. A compositionally biased stretch (basic and acidic residues) spans 258 to 271; the sequence is ETSHESVDSSKEEP.

The protein is Pleckstrin homology domain-containing family S member 1 of Homo sapiens (Human).